The chain runs to 181 residues: Adenine phosphoribosyltransferase (181 aa).

It belongs to the purine/pyrimidine phosphoribosyltransferase family. As to quaternary structure, homodimer.

It localises to the cytoplasm. It carries out the reaction AMP + diphosphate = 5-phospho-alpha-D-ribose 1-diphosphate + adenine. The protein operates within purine metabolism; AMP biosynthesis via salvage pathway; AMP from adenine: step 1/1. In terms of biological role, catalyzes a salvage reaction resulting in the formation of AMP, that is energically less costly than de novo synthesis. The chain is Adenine phosphoribosyltransferase from Vibrio vulnificus (strain CMCP6).